The sequence spans 407 residues: FMN-dependent alpha-hydroxy acid dehydrogenase PB1A11.03 (407 aa).

The FMN hydroxy acid dehydrogenase domain maps to 28 to 406 (QRPQITVDGR…DLNRDVLYKE (379 aa)). An a 2-oxocarboxylate-binding site is contributed by Y54. 2 residues coordinate FMN: S136 and Q158. Y160 contributes to the a 2-oxocarboxylate binding site. FMN is bound at residue T188. Residue R197 participates in a 2-oxocarboxylate binding. Position 277 (K277) interacts with FMN. The active-site Proton acceptor is H301. R304 provides a ligand contact to a 2-oxocarboxylate. FMN is bound by residues 332-336 (DSGVR) and 355-356 (GR).

This sequence belongs to the FMN-dependent alpha-hydroxy acid dehydrogenase family. FMN is required as a cofactor.

The protein resides in the cytoplasm. It is found in the nucleus. The chain is FMN-dependent alpha-hydroxy acid dehydrogenase PB1A11.03 from Schizosaccharomyces pombe (strain 972 / ATCC 24843) (Fission yeast).